The following is a 76-amino-acid chain: DNA-directed RNA polymerase subunit omega (76 aa).

This sequence belongs to the RNA polymerase subunit omega family. As to quaternary structure, in cyanobacteria the RNAP catalytic core is composed of 2 alpha, 1 beta, 1 beta', 1 gamma and 1 omega subunit. When a sigma factor is associated with the core the holoenzyme is formed, which can initiate transcription.

It carries out the reaction RNA(n) + a ribonucleoside 5'-triphosphate = RNA(n+1) + diphosphate. Functionally, promotes RNA polymerase assembly. Latches the N- and C-terminal regions of the beta' subunit thereby facilitating its interaction with the beta and alpha subunits. This Synechococcus elongatus (strain ATCC 33912 / PCC 7942 / FACHB-805) (Anacystis nidulans R2) protein is DNA-directed RNA polymerase subunit omega.